The sequence spans 621 residues: Pre-mRNA-processing protein 45 (621 aa).

Disordered stretches follow at residues 1–73 (MSAT…YANG), 137–164 (SQRT…SNTE), 220–251 (AQRD…RSPP), 347–438 (RARE…ELRM), and 542–621 (GKND…EHDS). Low complexity predominate over residues 36-51 (PSTSSSSSALVSTSSP). Composition is skewed to basic and acidic residues over residues 140–164 (TDIK…SNTE) and 220–229 (AQRDPLEPPR). Positions 239–248 (PPSPPPPVLR) are enriched in pro residues. Positions 364-380 (GRDDDVASRLADSDARP) are enriched in basic and acidic residues. A compositionally biased stretch (acidic residues) spans 403–417 (DSDESAASDEEDDEG). Composition is skewed to basic and acidic residues over residues 418-437 (ARER…RELR) and 594-621 (EDAK…EHDS).

The protein belongs to the SNW family. Associated with the spliceosome.

The protein resides in the nucleus. Functionally, involved in pre-mRNA splicing. The sequence is that of Pre-mRNA-processing protein 45 (PRP45) from Mycosarcoma maydis (Corn smut fungus).